Here is a 414-residue protein sequence, read N- to C-terminus: MLQKPRGTQDFFLDETKLWIKVETKLREILNKFNYSEIRTPMFESKELFIRSIGSTSDIVSKEMYEFVDKKNRSLVLKPEGTASVVRAVVENKLYAEDYLPFKTYYISPMFRYERPQNGRYRQFHQLGIEVYGSDSIQQDYEVLNIANNIINDFKLNKNIKIYTNYLITGKNREQYILELKKYLTDFKLCNDCNIRIEKNPLRVLDCKIDDKQFNNVPSMKDFLTDEEQKRYQQTLDLFKEMNISTIHDDKLVRGLDYYTGFIFEIKYEAKNIEQTIIAGGRYNNLVYEIGNINLPACGFGMGLERFINIIKEQNNKLNKNDQSIDLYTICLDQSAIKLNQQILELSRSIGLISDSNYYNMSLKSALKKSDKLNPKYLIILGEKEATSNQFIIKNKINKTEIKTTLTNFVNDLK.

Belongs to the class-II aminoacyl-tRNA synthetase family. In terms of assembly, homodimer.

It localises to the cytoplasm. The enzyme catalyses tRNA(His) + L-histidine + ATP = L-histidyl-tRNA(His) + AMP + diphosphate + H(+). This chain is Histidine--tRNA ligase, found in Mycoplasma capricolum subsp. capricolum (strain California kid / ATCC 27343 / NCTC 10154).